A 529-amino-acid polypeptide reads, in one-letter code: tRNA (uracil-O(2)-)-methyltransferase (529 aa).

The disordered stretch occupies residues 78–107 (IFDTHEGPVDDDKKDTDKDKNTPVPPNLQD). A compositionally biased stretch (basic and acidic residues) spans 80 to 98 (DTHEGPVDDDKKDTDKDKN).

It belongs to the TRM44 family.

The protein localises to the cytoplasm. The catalysed reaction is uridine(44) in tRNA(Ser) + S-adenosyl-L-methionine = 2'-O-methyluridine(44) in tRNA(Ser) + S-adenosyl-L-homocysteine + H(+). Functionally, probable adenosyl-L-methionine (AdoMet)-dependent tRNA (uracil-O(2)-)-methyltransferase. The sequence is that of tRNA (uracil-O(2)-)-methyltransferase (TRM44) from Yarrowia lipolytica (strain CLIB 122 / E 150) (Yeast).